Reading from the N-terminus, the 463-residue chain is L-seryl-tRNA(Sec) selenium transferase (463 aa).

Residue lysine 295 is modified to N6-(pyridoxal phosphate)lysine.

The protein belongs to the SelA family. As to quaternary structure, homodecamer; pentamer of dimers. Binds only one seryl-tRNA(Sec) per dimer. Pyridoxal 5'-phosphate is required as a cofactor.

The protein resides in the cytoplasm. The enzyme catalyses L-seryl-tRNA(Sec) + selenophosphate + H(+) = L-selenocysteinyl-tRNA(Sec) + phosphate. The protein operates within aminoacyl-tRNA biosynthesis; selenocysteinyl-tRNA(Sec) biosynthesis; selenocysteinyl-tRNA(Sec) from L-seryl-tRNA(Sec) (bacterial route): step 1/1. Its function is as follows. Converts seryl-tRNA(Sec) to selenocysteinyl-tRNA(Sec) required for selenoprotein biosynthesis. The polypeptide is L-seryl-tRNA(Sec) selenium transferase (Escherichia fergusonii (strain ATCC 35469 / DSM 13698 / CCUG 18766 / IAM 14443 / JCM 21226 / LMG 7866 / NBRC 102419 / NCTC 12128 / CDC 0568-73)).